Consider the following 640-residue polypeptide: Translation factor GUF1, mitochondrial (640 aa).

The transit peptide at 1-26 (MRRLRSLYLQSSICFRRFNHYSAKDT) directs the protein to the mitochondrion. The tr-type G domain occupies 39 to 223 (ENYRNFSIVA…AIIDRIPPPT (185 aa)). GTP contacts are provided by residues 48–55 (AHVDHGKS), 115–119 (DTPGH), and 169–172 (NKID).

The protein belongs to the TRAFAC class translation factor GTPase superfamily. Classic translation factor GTPase family. LepA subfamily.

It localises to the mitochondrion inner membrane. It catalyses the reaction GTP + H2O = GDP + phosphate + H(+). Its function is as follows. Promotes mitochondrial protein synthesis. May act as a fidelity factor of the translation reaction, by catalyzing a one-codon backward translocation of tRNAs on improperly translocated ribosomes. Binds to mitochondrial ribosomes in a GTP-dependent manner. The sequence is that of Translation factor GUF1, mitochondrial from Lachancea thermotolerans (strain ATCC 56472 / CBS 6340 / NRRL Y-8284) (Yeast).